A 285-amino-acid chain; its full sequence is Elongation factor Ts (285 aa).

The interval 84-87 (TDFV) is involved in Mg(2+) ion dislocation from EF-Tu.

Belongs to the EF-Ts family.

The protein localises to the cytoplasm. Associates with the EF-Tu.GDP complex and induces the exchange of GDP to GTP. It remains bound to the aminoacyl-tRNA.EF-Tu.GTP complex up to the GTP hydrolysis stage on the ribosome. The polypeptide is Elongation factor Ts (Bifidobacterium animalis subsp. lactis (strain AD011)).